A 287-amino-acid polypeptide reads, in one-letter code: Eukaryotic translation initiation factor 3 subunit G (287 aa).

The disordered stretch occupies residues 163 to 207 (EEDLESKEKDTKLGPTVPGSGKYVAPGMRGDRPAVTGGAERRSEE). The RRM domain occupies 208–286 (NTCRVTNLPE…LVLKVEWTRF (79 aa)).

The protein belongs to the eIF-3 subunit G family. As to quaternary structure, component of the eukaryotic translation initiation factor 3 (eIF-3) complex.

Its subcellular location is the cytoplasm. Its function is as follows. RNA-binding component of the eukaryotic translation initiation factor 3 (eIF-3) complex, which is involved in protein synthesis of a specialized repertoire of mRNAs and, together with other initiation factors, stimulates binding of mRNA and methionyl-tRNAi to the 40S ribosome. The eIF-3 complex specifically targets and initiates translation of a subset of mRNAs involved in cell proliferation. This subunit can bind 18S rRNA. The sequence is that of Eukaryotic translation initiation factor 3 subunit G from Brugia malayi (Filarial nematode worm).